The following is a 186-amino-acid chain: Peptidyl-tRNA hydrolase (186 aa).

Residue Tyr-13 coordinates tRNA. His-18 functions as the Proton acceptor in the catalytic mechanism. Tyr-59, Asn-61, and Asn-107 together coordinate tRNA.

This sequence belongs to the PTH family. As to quaternary structure, monomer.

It is found in the cytoplasm. The catalysed reaction is an N-acyl-L-alpha-aminoacyl-tRNA + H2O = an N-acyl-L-amino acid + a tRNA + H(+). Its function is as follows. Hydrolyzes ribosome-free peptidyl-tRNAs (with 1 or more amino acids incorporated), which drop off the ribosome during protein synthesis, or as a result of ribosome stalling. Functionally, catalyzes the release of premature peptidyl moieties from peptidyl-tRNA molecules trapped in stalled 50S ribosomal subunits, and thus maintains levels of free tRNAs and 50S ribosomes. The chain is Peptidyl-tRNA hydrolase from Thermotoga maritima (strain ATCC 43589 / DSM 3109 / JCM 10099 / NBRC 100826 / MSB8).